The following is a 548-amino-acid chain: Natural resistance-associated macrophage protein 1 (548 aa).

Residues 1-11 show a composition bias toward polar residues; sequence MSGDTGPSKQG. The tract at residues 1–38 is disordered; it reads MSGDTGPSKQGGTRYGSISSPPSPGPQQAPPGGTYLGE. The Cytoplasmic portion of the chain corresponds to 1-55; the sequence is MSGDTGPSKQGGTRYGSISSPPSPGPQQAPPGGTYLGEKIPIPDTESGAFSLRKL. Residues 56-73 traverse the membrane as a helical segment; that stretch reads WAFTGPGFLMSIAFLDPG. Over 74–82 the chain is Extracellular; it reads NIESDLQAG. Residues 83–102 form a helical membrane-spanning segment; that stretch reads AVAGFKLLWVLLWATVLGLL. Over 103-139 the chain is Cytoplasmic; the sequence is CQRLAARLGVVTGKDLGEVCHLYYPKVPRILLWLTIE. A helical transmembrane segment spans residues 140–160; it reads LAIVGSDMQEVIGTAIAFSLL. The Extracellular portion of the chain corresponds to 161–164; that stretch reads SAGR. The chain crosses the membrane as a helical span at residues 165 to 184; the sequence is IPLWGGVLITVVDTFFFLFL. The Cytoplasmic portion of the chain corresponds to 185–193; the sequence is DNYGLRKLE. The helical transmembrane segment at 194-214 threads the bilayer; the sequence is AFFGFLITIMALTFGYEYVVA. Residues 215-237 lie on the Extracellular side of the membrane; that stretch reads QPAQGALLQGLFLPSCRGCGQPE. Residues 238 to 256 form a helical membrane-spanning segment; the sequence is LLQAVGIIGAIIMPHNIYL. The Cytoplasmic portion of the chain corresponds to 257–284; that stretch reads HSSLVKSREVDRSRRADIREANMYFLIE. A helical transmembrane segment spans residues 285 to 304; sequence ATIALSVSFLINLFVMAVFG. The Extracellular segment spans residues 305–346; the sequence is QAFYKQTNQAAFNICAKSSLHDYAPIFPRNNLTVAVDIYQGG. A glycan (N-linked (GlcNAc...) asparagine) is linked at asparagine 335. A helical membrane pass occupies residues 347–366; that stretch reads VILGCLFGPAALYIWAVGLL. The Cytoplasmic segment spans residues 367–397; that stretch reads AAGQSSTMTGTYAGQFVMEGFLKLRWSRFAR. Residues 398–415 form a helical membrane-spanning segment; it reads VLLTRSCAILPTVLLAVF. At 416–426 the chain is on the extracellular side; the sequence is RDLRDLSGLND. Residues 427–447 traverse the membrane as a helical segment; sequence LLNVLQSLLLPFAVLPILTFT. The Cytoplasmic portion of the chain corresponds to 448 to 463; that stretch reads SMPALMQEFANGLVSK. The helical transmembrane segment at 464 to 485 threads the bilayer; it reads VITSSIMVLVCAVNLYFVISYV. Topologically, residues 486–493 are extracellular; sequence PSLPHPAY. A helical transmembrane segment spans residues 494–513; sequence FSLVALLAAAYLGLTTYLVW. The Cytoplasmic segment spans residues 514-548; sequence TCLITQGATFLAHNSHQRFLYGLPEEDQEKGRTSG.

This sequence belongs to the NRAMP family.

It is found in the late endosome membrane. The protein localises to the lysosome membrane. The catalysed reaction is Zn(2+)(in) + H(+)(out) = Zn(2+)(out) + H(+)(in). The enzyme catalyses Fe(2+)(in) + H(+)(out) = Fe(2+)(out) + H(+)(in). It catalyses the reaction Mn(2+)(in) + H(+)(out) = Mn(2+)(out) + H(+)(in). Functionally, macrophage-specific antiporter that fluxes metal ions in either direction against a proton gradient. Localized to late endosomal lysosomal membranes, delivers bivalent cations from the cytosol into these acidic compartments where they may directly affect antimicrobial activity. Involved in iron metabolism and host natural resistance to infection with intracellular parasites. Pathogen resistance involves sequestration of Fe(2+) and Mn(2+), cofactors of both prokaryotic and eukaryotic catalases and superoxide dismutases, not only to protect the macrophage against its own generation of reactive oxygen species, but to deny the cations to the pathogen for synthesis of its protective enzymes. This is Natural resistance-associated macrophage protein 1 (SLC11A1) from Bubalus bubalis (Domestic water buffalo).